Here is an 87-residue protein sequence, read N- to C-terminus: Toxin Cll5c (87 aa).

Positions 1–19 (MNSLLMITACLVLFGTVWA) are cleaved as a signal peptide. An LCN-type CS-alpha/beta domain is found at 20-85 (KEGYLVNKST…TYPLPNKSCS (66 aa)). Cystine bridges form between Cys31-Cys84, Cys35-Cys60, Cys44-Cys65, and Cys48-Cys67. A propeptide spans 86–87 (KK) (removed by a carboxypeptidase).

It belongs to the long (4 C-C) scorpion toxin superfamily. Sodium channel inhibitor family. Beta subfamily. As to expression, expressed by the venom gland.

It is found in the secreted. In terms of biological role, beta toxins bind voltage-independently at site-4 of sodium channels (Nav) and shift the voltage of activation toward more negative potentials thereby affecting sodium channel activation and promoting spontaneous and repetitive firing. The protein is Toxin Cll5c of Centruroides limpidus (Mexican scorpion).